The following is a 508-amino-acid chain: CUGBP Elav-like family member 2 (508 aa).

Necessary for RNA-binding, TNNT2 exon 5 and NMDA R1 exon 21 inclusion regions lie at residues 1-283 and 357-508; these read MRCP…LQNL and LAGM…SKPY. 3 consecutive RRM domains span residues 40–123, 132–212, and 423–501; these read IKMF…PADS, RKLF…FADT, and ANLF…LKRS.

The protein belongs to the CELF/BRUNOL family. As to quaternary structure, interacts with A1CF. Expressed in frontal cortex. Isoform 1 is expressed in brain and lung. Isoform 2 is expressed in heart, brain, placenta, lung, liver, kidney, skeletal muscle and pancreas. Isoform 4 is expressed in heart, lung, skeletal muscle, kidney and pancreas.

The protein localises to the nucleus. It is found in the cytoplasm. Functionally, RNA-binding protein implicated in the regulation of several post-transcriptional events. Involved in pre-mRNA alternative splicing, mRNA translation and stability. Mediates exon inclusion and/or exclusion in pre-mRNA that are subject to tissue-specific and developmentally regulated alternative splicing. Specifically activates exon 5 inclusion of TNNT2 in embryonic, but not adult, skeletal muscle. Activates TNNT2 exon 5 inclusion by antagonizing the repressive effect of PTB. Acts both as an activator and as a repressor of a pair of coregulated exons: promotes inclusion of the smooth muscle (SM) exon but exclusion of the non-muscle (NM) exon in actinin pre-mRNAs. Promotes inclusion of exonS 21 and exclusion of exon 5 of the NMDA receptor R1 pre-mRNA. Involved in the apoB RNA editing activity. Increases COX2 mRNA stability and inhibits COX2 mRNA translation in epithelial cells after radiation injury. Modulates the cellular apoptosis program by regulating COX2-mediated prostaglandin E2 (PGE2) expression. Binds to (CUG)n triplet repeats in the 3'-UTR of transcripts such as DMPK. Binds to the muscle-specific splicing enhancer (MSE) intronic sites flanking the TNNT2 alternative exon 5. Binds preferentially to UG-rich sequences, in particular UG repeat and UGUU motifs. Binds to apoB mRNA, specifically to AU-rich sequences located immediately upstream of the edited cytidine. Binds AU-rich sequences in the 3'-UTR of COX2 mRNA. Binds to an intronic RNA element responsible for the silencing of exon 21 splicing. Binds to (CUG)n repeats. May be a specific regulator of miRNA biogenesis. Binds to primary microRNA pri-MIR140 and, with CELF1, negatively regulates the processing to mature miRNA. The protein is CUGBP Elav-like family member 2 (CELF2) of Homo sapiens (Human).